A 974-amino-acid chain; its full sequence is MAKAGSAGGPSPGGGAPWHLRNVLSDSVESSDDEFFDAREEVAEGKNAILIGMSQWSSNDLVEQIETIGKLDERQGDGATACTSSILQEKQRELYRVSLRRQRFPAQGSIEIHEDGEEGCSQRSCKTHVLLLVLHGGNVLDTGSGDPSCKAADIHTFSSVLEKVMRAHFPAALGHILIKFVPCPAICSEAFSLVSNLNPYSHDEGCLGTSQDHVPLAALPLLAISSPQYQDAVATVIERANHIYGEFLKSSDGIGFNGQVCLIGDCVGGLLAFDAICYSAGPSGDSPGSSSRKGSISSTQDTPVVVEEDCSLASSKRLSKSNVDVSSGVEDEDPKRPLPRKQSDSSTYDCEAITQHHAFLSSIHSSVLKDEAEAPAAGTPQLSEVSLGRFDFDVSDFFLFGSPLGLVLAMRRTVLPGIDGFQMRPACSQVYSFFHCADPSASRLEPLLEPKFHLVPPVSVPRYQRFPLGDGQSLLLADALHTHSPLFLEGSSRGSPPLLDAPASPPQAPRFQRTERRLSKGSSHSDSSESSDSLAPMGASRITAKWWGTKRIDYALYCPDVLTAFPTVALPHLFHASYWESTDVVAFILRQVMRYESASVKESTGLDPTALSPANPREKWLRKRTQVKLRNVTANHRANDVIAAEDGPQVLVGRFMYGPLDMVALTGEKVDILVMTEPSSGRWVHLDTEITNNSGRITYNVPRPRRLGVGVYPVKMVVRGDQTCAMSYLTVLPRGMECVVFSIDGSFAASVSIMGSDPKVRPGAVDVVRHWQDLGYMILYITGRPDMQKQRVVSWLSQHNFPQGMIFFSDGLVHDPLRQKAIFLRNLMQECFIKITAAYGSTKDISVYSVLGLPASQIFIVGRSTKKYQTQCQFLSEGYAAHLAALEASHRSRPKKNNSRMILRKGSFGLHAQPEFLRKRNHLRRTMSVQQPDPPAANPKPERAQSQPESDKDHERPLPALSWARGPPKFESVP.

A phosphoserine mark is found at Ser-30, Ser-31, Ser-109, Ser-295, Ser-298, Ser-321, Ser-343, and Ser-495. A disordered region spans residues 310 to 347 (CSLASSKRLSKSNVDVSSGVEDEDPKRPLPRKQSDSST). The segment covering 312 to 325 (LASSKRLSKSNVDV) has biased composition (polar residues). In terms of domain architecture, DDHD spans 390–594 (FDFDVSDFFL…VAFILRQVMR (205 aa)). Residues 497–535 (PLLDAPASPPQAPRFQRTERRLSKGSSHSDSSESSDSLA) are disordered. Positions 520–533 (KGSSHSDSSESSDS) are enriched in low complexity. Residues Ser-612, Ser-907, Ser-928, and Ser-946 each carry the phosphoserine modification. The interval 927-974 (MSVQQPDPPAANPKPERAQSQPESDKDHERPLPALSWARGPPKFESVP) is disordered.

Belongs to the PtdIns transfer protein family. PI transfer class IIA subfamily. As to quaternary structure, interacts with PTK2B via its C-terminus.

The protein localises to the endomembrane system. Catalyzes the transfer of phosphatidylinositol and phosphatidylcholine between membranes (in vitro). Binds calcium ions. The protein is Membrane-associated phosphatidylinositol transfer protein 3 (Pitpnm3) of Mus musculus (Mouse).